We begin with the raw amino-acid sequence, 110 residues long: Integration host factor subunit alpha (110 aa).

This sequence belongs to the bacterial histone-like protein family. In terms of assembly, heterodimer of an alpha and a beta chain.

In terms of biological role, this protein is one of the two subunits of integration host factor, a specific DNA-binding protein that functions in genetic recombination as well as in transcriptional and translational control. The chain is Integration host factor subunit alpha from Nitrobacter hamburgensis (strain DSM 10229 / NCIMB 13809 / X14).